Reading from the N-terminus, the 245-residue chain is UPF0319 protein VV0984 (245 aa).

Residues 1–20 (MRYIGKWMMLGALVSSSVFA) form the signal peptide.

Belongs to the UPF0319 family.

This Vibrio vulnificus (strain YJ016) protein is UPF0319 protein VV0984.